We begin with the raw amino-acid sequence, 97 residues long: Protein RALF-like 2 (97 aa).

The N-terminal stretch at 1 to 25 (MEARHMLVTILLLSFVFMNIMKVEA) is a signal peptide. Intrachain disulfides connect C42-C49 and C61-C67.

This sequence belongs to the plant rapid alkalinization factor (RALF) family.

Its subcellular location is the secreted. Its function is as follows. Cell signaling peptide that may regulate plant stress, growth, and development. Mediates a rapid alkalinization of extracellular space by mediating a transient increase in the cytoplasmic Ca(2+) concentration leading to a calcium-dependent signaling events through a cell surface receptor and a concomitant activation of some intracellular mitogen-activated protein kinases. This chain is Protein RALF-like 2 (RALFL2), found in Arabidopsis thaliana (Mouse-ear cress).